The following is a 161-amino-acid chain: Phosphopantetheine adenylyltransferase (161 aa).

S11 contributes to the substrate binding site. ATP contacts are provided by residues 11–12 (SF) and H19. Substrate is bound by residues K43, L75, and R89. ATP is bound by residues 90-92 (GLR), E100, and 125-131 (YSFISSS).

The protein belongs to the bacterial CoaD family. In terms of assembly, homohexamer. The cofactor is Mg(2+).

The protein resides in the cytoplasm. It carries out the reaction (R)-4'-phosphopantetheine + ATP + H(+) = 3'-dephospho-CoA + diphosphate. It functions in the pathway cofactor biosynthesis; coenzyme A biosynthesis; CoA from (R)-pantothenate: step 4/5. In terms of biological role, reversibly transfers an adenylyl group from ATP to 4'-phosphopantetheine, yielding dephospho-CoA (dPCoA) and pyrophosphate. The chain is Phosphopantetheine adenylyltransferase from Staphylococcus carnosus (strain TM300).